The primary structure comprises 254 residues: Low affinity immunoglobulin gamma Fc region receptor III-A (254 aa).

Residues 1-20 (MWQLLLPTALLLLVSAGMRA) form the signal peptide. Residues 21-206 (EDLPKAVVFL…SSISSFFPPG (186 aa)) lie on the Extracellular side of the membrane. Ig-like C2-type domains are found at residues 24 to 105 (PKAV…LEVH) and 107 to 189 (GWLL…VNIT). 2 cysteine pairs are disulfide-bonded: Cys47–Cys89 and Cys128–Cys172. Asn187 is a glycosylation site (N-linked (GlcNAc...) asparagine). A helical transmembrane segment spans residues 207 to 229 (YQVSFCLVMVLLFAVDTGLYFSV). The Cytoplasmic segment spans residues 230–254 (KKSVPSSTRDWEDHKFKWSKDPQDK).

In terms of assembly, forms a heterooligomeric complex with ITAM-containing signaling subunits, either a homodimer of CD247, a homodimer of FCER1G or a heterodimer of CD247 and FCER1G, to form a functional receptor complex. Interacts (via transmembrane domain) with signaling subunits; this interaction is a prerequisite for receptor complex expression on the cell surface and intracellular signal transduction. Binds the Fc region of antigen-complexed IgG with a preference for IgG1 and IgG3 isotypes. Interacts with CD2; this interaction is involved in NK cell activation and cytotoxicity. Interacts with S100A4; this interaction inhibits PKC-dependent phosphorylation of FCGR3A. In terms of processing, glycosylated. Glycosylation plays an inhibitory role in the interaction with IgG1 and IgG2. Post-translationally, undergoes rapid ectodomain shedding upon NK cell stimulation. The soluble form is produced by a proteolytic cleavage mediated by ADAM17. Repeated stimulation causes receptor shedding, a mechanism that allows for increased NK cell motility and detachment from opsonized target cells while avoiding activation-induced NK cell apoptosis. In terms of tissue distribution, lymphocytes and monocytes.

It is found in the cell membrane. Its subcellular location is the secreted. Functionally, receptor for the invariable Fc fragment of immunoglobulin gamma (IgG). Optimally activated upon binding of clustered antigen-IgG complexes displayed on cell surfaces, triggers lysis of antibody-coated cells, a process known as antibody-dependent cellular cytotoxicity (ADCC). Does not bind free monomeric IgG, thus avoiding inappropriate effector cell activation in the absence of antigenic trigger. Mediates IgG effector functions on natural killer (NK) cells. Binds antigen-IgG complexes generated upon infection and triggers NK cell-dependent cytokine production and degranulation to limit viral load and propagation. Involved in the generation of memory-like adaptive NK cells capable to produce high amounts of IFNG and to efficiently eliminate virus-infected cells via ADCC. Regulates NK cell survival and proliferation, in particular by preventing NK cell progenitor apoptosis. Fc-binding subunit that associates with CD247 and/or FCER1G adapters to form functional signaling complexes. Following the engagement of antigen-IgG complexes, triggers phosphorylation of immunoreceptor tyrosine-based activation motif (ITAM)-containing adapters with subsequent activation of phosphatidylinositol 3-kinase signaling and sustained elevation of intracellular calcium that ultimately drive NK cell activation. The ITAM-dependent signaling coupled to receptor phosphorylation by PKC mediates robust intracellular calcium flux that leads to production of pro-inflammatory cytokines, whereas in the absence of receptor phosphorylation it mainly activates phosphatidylinositol 3-kinase signaling leading to cell degranulation. Costimulates NK cells and trigger lysis of target cells independently of IgG binding. Mediates the antitumor activities of therapeutic antibodies. Upon ligation on monocytes triggers TNFA-dependent ADCC of IgG-coated tumor cells. Mediates enhanced ADCC in response to afucosylated IgGs. This chain is Low affinity immunoglobulin gamma Fc region receptor III-A, found in Macaca mulatta (Rhesus macaque).